We begin with the raw amino-acid sequence, 402 residues long: p-cumate 2,3-dioxygenase system, ferredoxin--NAD(+) reductase component (402 aa).

Positions 16, 51, 83, 131, and 275 each coordinate FAD.

This sequence belongs to the FAD-dependent oxidoreductase family. In terms of assembly, the p-cumate 2,3-dioxygenase multicomponent enzyme system is composed of an electron transfer component and a dioxygenase component (iron sulfur protein (ISP)). The electron transfer component is composed of a ferredoxin reductase (CmtAa) and a ferredoxin (CmtAd), and the dioxygenase component is formed of a large alpha subunit (CmtAb) and a small beta subunit (CmtAc). Requires FAD as cofactor.

The catalysed reaction is 2 reduced [2Fe-2S]-[ferredoxin] + NAD(+) + H(+) = 2 oxidized [2Fe-2S]-[ferredoxin] + NADH. Its pathway is aromatic compound metabolism; p-cumate degradation; acetaldehyde and pyruvate from p-cumate. Component of the p-cumate 2,3-dioxygenase multicomponent enzyme system which catalyzes the incorporation of both atoms of molecular oxygen into p-cumate to form cis-2,3-dihydroxy-2,3-dihydro-p-cumate. Ferredoxin reductase catalyzes the transfer of electrons from NADH to ferredoxin (CmtAd). This chain is p-cumate 2,3-dioxygenase system, ferredoxin--NAD(+) reductase component, found in Pseudomonas putida (Arthrobacter siderocapsulatus).